The primary structure comprises 373 residues: Glutamate 5-kinase (373 aa).

ATP is bound at residue Lys-12. Substrate-binding residues include Ser-52, Asp-139, and Asn-154. ATP is bound at residue 216–222 (TGGMVTK). Positions 281–359 (RGNICIDDGA…DEINTVLAGN (79 aa)) constitute a PUA domain.

It belongs to the glutamate 5-kinase family.

It is found in the cytoplasm. The catalysed reaction is L-glutamate + ATP = L-glutamyl 5-phosphate + ADP. The protein operates within amino-acid biosynthesis; L-proline biosynthesis; L-glutamate 5-semialdehyde from L-glutamate: step 1/2. Catalyzes the transfer of a phosphate group to glutamate to form L-glutamate 5-phosphate. The protein is Glutamate 5-kinase of Dehalococcoides mccartyi (strain ATCC BAA-2266 / KCTC 15142 / 195) (Dehalococcoides ethenogenes (strain 195)).